The sequence spans 779 residues: MINGLIQPKGSVSKETNKNSIALSLGLKFSEVEYLSTEILIDTYIVVFDPISEMVFYVGNAKGNPQTWNLNSDGNLILTTDFSTYTLLKIGLSNPDTSLKIGYQRKKINDSLSSIESVAGYMNSNFVSIMEFQHLITSKPNLNDMETWDWSPALDAAISYVQSYIPQTAVNSQMYGVMPIVFPPGVFQYSTEMKFTKYLNSTGSLSTCYTLIGSGMTSTVLQPITQGQNAFTATQCKINLINIGFRSGASYQTGAVLGSSTAWLPVVHSNWRCVGFSGFARGVVANLLFDSTFEDIFIQNISNMQSTSDVSYGFTFEVYTGPANGGTTGDGSGDDSNQITFIRPTIETSNADNAILFNASSINSTYPHHAINVFGGHIETHNLKAKCYNLKNCFNVNFYGTIFSQNGSAVDTNYRLGYIEACYNINFKNCRQVTTNRLTAYSSTDVKSIKITGNSKNIIFDNNHFINPYYSLNTYNKGPSYNIDSDTATVLDDSYLVINCTFNTYTNRNITSKISISNKNICNKNHILTVNDNGELVVSYTTSTDYSVTPTDILSFTNTGQIKTNGSIQLGIYNGTAGSKSIDFYSNGDKTTSMARILVDSSGRLYIRSFNGSQEWVFGSNAITPTTTSVYSIGSPSLTVNNLYVQNPVTVVSDENYKSNIQKIPDELLDAWENVEFNMWKMKAAINVKGITDARWHVGYIAQKIKSVLENAGLNWQDYGLITYESWIESEETYDQNGNVLSPYKAEGEIYMLRMEECLAVEMAYQRRKLDRIEKQLQK.

The Peptidase S74 domain occupies 653 to 779; that stretch reads SDENYKSNIQ…LDRIEKQLQK (127 aa).

Post-translationally, proteolytic cleavage and release of the chaperone in the host cytosol stabilizes the folded protein. The cleavage gives rise to the mature tail spike protein but is not essential for catalytic activity.

The protein localises to the virion. Its function is as follows. Functions as a receptor binding protein (RBP) and probably mediates the attachment to the host capsular exopolysaccharides. Displays a depolymerase activity that specifically degrades the K35-type polysaccharides of Klebsiella pneumoniae capsule. In terms of biological role, the C-terminal chaperone protein mediates homotrimerization and proper folding of the catalytic trimer. In Klebsiella phage K64-1 (Bacteriophage K64-1), this protein is Probable tail spike protein.